A 190-amino-acid polypeptide reads, in one-letter code: Elongation factor P (190 aa).

The protein belongs to the elongation factor P family.

Its subcellular location is the cytoplasm. The protein operates within protein biosynthesis; polypeptide chain elongation. Involved in peptide bond synthesis. Stimulates efficient translation and peptide-bond synthesis on native or reconstituted 70S ribosomes in vitro. Probably functions indirectly by altering the affinity of the ribosome for aminoacyl-tRNA, thus increasing their reactivity as acceptors for peptidyl transferase. This Mycoplasma pneumoniae (strain ATCC 29342 / M129 / Subtype 1) (Mycoplasmoides pneumoniae) protein is Elongation factor P (efp).